Here is a 445-residue protein sequence, read N- to C-terminus: Phosphoglucosamine mutase (445 aa).

Ser-102 serves as the catalytic Phosphoserine intermediate. Mg(2+) is bound by residues Ser-102, Asp-241, Asp-243, and Asp-245. The residue at position 102 (Ser-102) is a Phosphoserine.

Belongs to the phosphohexose mutase family. Mg(2+) serves as cofactor. Activated by phosphorylation.

The catalysed reaction is alpha-D-glucosamine 1-phosphate = D-glucosamine 6-phosphate. Catalyzes the conversion of glucosamine-6-phosphate to glucosamine-1-phosphate. The sequence is that of Phosphoglucosamine mutase from Variovorax paradoxus (strain S110).